Reading from the N-terminus, the 289-residue chain is 1D-myo-inositol 2-acetamido-2-deoxy-alpha-D-glucopyranoside deacetylase 1 (289 aa).

His4, Asp7, and His140 together coordinate Zn(2+).

This sequence belongs to the MshB deacetylase family. Zn(2+) serves as cofactor.

It catalyses the reaction 1D-myo-inositol 2-acetamido-2-deoxy-alpha-D-glucopyranoside + H2O = 1D-myo-inositol 2-amino-2-deoxy-alpha-D-glucopyranoside + acetate. In terms of biological role, catalyzes the deacetylation of 1D-myo-inositol 2-acetamido-2-deoxy-alpha-D-glucopyranoside (GlcNAc-Ins) in the mycothiol biosynthesis pathway. This is 1D-myo-inositol 2-acetamido-2-deoxy-alpha-D-glucopyranoside deacetylase 1 from Frankia alni (strain DSM 45986 / CECT 9034 / ACN14a).